Here is a 172-residue protein sequence, read N- to C-terminus: 3-hydroxydecanoyl-[acyl-carrier-protein] dehydratase (172 aa).

H71 is a catalytic residue.

The protein belongs to the thioester dehydratase family. FabA subfamily. As to quaternary structure, homodimer.

The protein localises to the cytoplasm. The catalysed reaction is a (3R)-hydroxyacyl-[ACP] = a (2E)-enoyl-[ACP] + H2O. The enzyme catalyses (3R)-hydroxydecanoyl-[ACP] = (2E)-decenoyl-[ACP] + H2O. It carries out the reaction (2E)-decenoyl-[ACP] = (3Z)-decenoyl-[ACP]. It participates in lipid metabolism; fatty acid biosynthesis. Its function is as follows. Necessary for the introduction of cis unsaturation into fatty acids. Catalyzes the dehydration of (3R)-3-hydroxydecanoyl-ACP to E-(2)-decenoyl-ACP and then its isomerization to Z-(3)-decenoyl-ACP. Can catalyze the dehydratase reaction for beta-hydroxyacyl-ACPs with saturated chain lengths up to 16:0, being most active on intermediate chain length. This is 3-hydroxydecanoyl-[acyl-carrier-protein] dehydratase from Serratia proteamaculans (strain 568).